The chain runs to 616 residues: Bifunctional 2-aminoethylphosphonate cytidylyltransferase/aminotransferase (616 aa).

Residues 1-240 (MIKQAVILAG…VKNIYPHIVE (240 aa)) are 2-aminoethylphosphonate cytidylyltransferase. Residues leucine 8, glycine 10, glycine 11, lysine 25, threonine 83, threonine 88, glutamate 104, and serine 105 each contribute to the CMP-(2-aminoethyl)phosphonate site. Positions 106 and 136 each coordinate Mg(2+). CMP-(2-aminoethyl)phosphonate-binding residues include aspartate 136, lysine 153, and glutamate 196. Positions 220 and 222 each coordinate Mg(2+). Positions 250 to 616 (EVLLNPGPAT…EYMNGIGVGV (367 aa)) are 2-aminoethylphosphonate aminotransferase. Serine 313, glycine 314, threonine 315, threonine 390, lysine 441, and threonine 490 together coordinate pyridoxal 5'-phosphate.

It in the N-terminal section; belongs to the LicC/PntC cytidylyltransferase family. The protein in the C-terminal section; belongs to the class-V pyridoxal-phosphate-dependent aminotransferase family. PhnW subfamily. Homodimer. Requires Mg(2+) as cofactor. The cofactor is Zn(2+). Pyridoxal 5'-phosphate is required as a cofactor.

It carries out the reaction (2-aminoethyl)phosphonate + CTP = CMP-(2-aminoethyl)phosphonate + diphosphate. The enzyme catalyses (2-aminoethyl)phosphonate + pyruvate = phosphonoacetaldehyde + L-alanine. Its pathway is phosphorus metabolism; phosphonate biosynthesis. Its activity is regulated as follows. Cytidylyltransferase activity is inhibited in the presence of EDTA and is restored by the addition of Mg(2+) or Zn(2+). In terms of biological role, bifunctional transferase involved in the biosynthesis of cell-surface phosphonates. The aminotransferase region catalyzes the transformation of phosphonoacetaldehyde (PnAA) to 2-aminoethylphosphonate (AEP). The cytidylyltransferase region catalyzes the activation of 2-aminoethylphosphonate (AEP) to CMP-2-aminoethylphosphonate (CMP-AEP). Cannot use phosphocholine. Exhibits strong activity towards CTP, limited activity towards ATP and no activity with GTP. The protein is Bifunctional 2-aminoethylphosphonate cytidylyltransferase/aminotransferase of Treponema denticola (strain ATCC 35405 / DSM 14222 / CIP 103919 / JCM 8153 / KCTC 15104).